A 581-amino-acid chain; its full sequence is Peptidyl-prolyl cis-trans isomerase FKBP10 (581 aa).

The signal sequence occupies residues 1-33 (MFLVGSSSHTLHRLRILPLLLLLQTLERGLGRA). 3 PPIase FKBP-type domains span residues 61–149 (GDFV…LDVW), 173–261 (SDFV…LDVH), and 285–373 (GDFM…IDFH). Residues Asn-69, Asn-181, Asn-293, Asn-309, Asn-351, Asn-392, and Asn-406 are each glycosylated (N-linked (GlcNAc...) asparagine). The PPIase FKBP-type 4 domain occupies 398–485 (GDFIRYHYNC…LFEVELVSRE (88 aa)). 2 consecutive EF-hand domains span residues 496 to 531 (WYQDPSTSLFEDMDLNKDGEVPPEEFSSFIKAQVNE) and 541 to 576 (DPDKTISDMFQNQDRNQDGKITAEELKLKSDEDQER). 10 residues coordinate Ca(2+): Asp-509, Asn-511, Asp-513, Glu-515, Glu-520, Asp-554, Asn-556, Asp-558, Lys-560, and Glu-565. The interval 533 to 581 (KGRLMPGQDPDKTISDMFQNQDRNQDGKITAEELKLKSDEDQERVHEEL) is disordered. Residues 555–581 (RNQDGKITAEELKLKSDEDQERVHEEL) are compositionally biased toward basic and acidic residues. The Prevents secretion from ER signature appears at 578 to 581 (HEEL).

N-glycosylated. Post-translationally, phosphorylated. Expressed in aorta, brain, heart, kidney, lung, spleen and testis. Not detected in liver.

It localises to the endoplasmic reticulum lumen. It catalyses the reaction [protein]-peptidylproline (omega=180) = [protein]-peptidylproline (omega=0). Inhibited by both FK506 and rapamycin, but not by cyclosporin A. Functionally, PPIases accelerate the folding of proteins during protein synthesis. This Mus musculus (Mouse) protein is Peptidyl-prolyl cis-trans isomerase FKBP10 (Fkbp10).